Reading from the N-terminus, the 374-residue chain is Pyruvate dehydrogenase E1 component subunit beta-1, mitochondrial (374 aa).

The transit peptide at 1-34 (MLGIARRRLGSGCALGQLMQALRPAAAAAAARTY) directs the protein to the mitochondrion. Residue Glu97 participates in thiamine diphosphate binding. K(+)-binding residues include Ile150, Ala198, Ile199, and Asp201.

As to quaternary structure, tetramer of 2 alpha and 2 beta subunits. Thiamine diphosphate serves as cofactor.

The protein resides in the mitochondrion matrix. The enzyme catalyses N(6)-[(R)-lipoyl]-L-lysyl-[protein] + pyruvate + H(+) = N(6)-[(R)-S(8)-acetyldihydrolipoyl]-L-lysyl-[protein] + CO2. In terms of biological role, the pyruvate dehydrogenase complex catalyzes the overall conversion of pyruvate to acetyl-CoA and CO(2). It contains multiple copies of three enzymatic components: pyruvate dehydrogenase (E1), dihydrolipoamide acetyltransferase (E2) and lipoamide dehydrogenase (E3). The protein is Pyruvate dehydrogenase E1 component subunit beta-1, mitochondrial of Oryza sativa subsp. japonica (Rice).